Here is a 904-residue protein sequence, read N- to C-terminus: DNA mismatch repair protein MutS (904 aa).

655-662 contacts ATP; that stretch reads GPNMGGKS.

Belongs to the DNA mismatch repair MutS family.

Its function is as follows. This protein is involved in the repair of mismatches in DNA. It is possible that it carries out the mismatch recognition step. This protein has a weak ATPase activity. This is DNA mismatch repair protein MutS from Agrobacterium fabrum (strain C58 / ATCC 33970) (Agrobacterium tumefaciens (strain C58)).